The sequence spans 138 residues: Basic phospholipase A2 homolog Tpu-K49a (138 aa).

Residues 1–16 form the signal peptide; that stretch reads MRTLWIMAVLLVGVEG. 6 cysteine pairs are disulfide-bonded: Cys-42-Cys-131, Cys-44-Cys-60, Cys-59-Cys-111, Cys-65-Cys-138, Cys-66-Cys-104, and Cys-91-Cys-102. An important for membrane-damaging activities in eukaryotes and bacteria; heparin-binding region spans residues 121-133; it reads KKERINTKIFCKK.

In terms of assembly, monomer. Expressed by the venom gland.

It localises to the secreted. Snake venom phospholipase A2 homolog that lacks catalytic activity. Induces local edema a few hours after injection in the hind foot. Is myotoxic. A model of myotoxic mechanism has been proposed: an apo Lys49-PLA2 is activated by the entrance of a hydrophobic molecule (e.g. fatty acid) at the hydrophobic channel of the protein leading to a reorientation of a monomer. This reorientation causes a transition between 'inactive' to 'active' states, causing alignment of C-terminal and membrane-docking sites (MDoS) side-by-side and putting the membrane-disruption sites (MDiS) in the same plane, exposed to solvent and in a symmetric position for both monomers. The MDoS region stabilizes the toxin on membrane by the interaction of charged residues with phospholipid head groups. Subsequently, the MDiS region destabilizes the membrane with penetration of hydrophobic residues. This insertion causes a disorganization of the membrane, allowing an uncontrolled influx of ions (i.e. calcium and sodium), and eventually triggering irreversible intracellular alterations and cell death. This chain is Basic phospholipase A2 homolog Tpu-K49a, found in Craspedocephalus puniceus (Flat-nosed pitviper).